The sequence spans 405 residues: uncharacterized protein (405 aa).

The next 10 membrane-spanning stretches (helical) occupy residues 9 to 29 (VFALLLSQSFQSLAGVLVTIV), 41 to 61 (VFLAGLILSFMSFASIAASFC), 74 to 94 (VLAGANLLRAVFIILMAYSVT), 98 to 118 (QAFFWITLLFVFCFSFAGAFF), 138 to 158 (ANGVISLSNQLFLTAGWGLGG), 168 to 190 (LVVGAAICLFVLSGASISVLHVN), 227 to 247 (ALAGSVWSSAILLAFTAAVLH), 252 to 272 (WWGMFNASYFIGAIVGSVIAI), 291 to 311 (LVMSALTLLFSFSPVPFLCAL), and 373 to 393 (IAFIAAAALYIMTFLIALAQP).

This sequence belongs to the major facilitator superfamily. Drug:H(+) antiporter-3 (DHA3) (TC 2.A.1.21) family.

It localises to the cell membrane. This is an uncharacterized protein from Bacillus subtilis (strain 168).